We begin with the raw amino-acid sequence, 243 residues long: Protein HUA2 (243 aa).

Its subcellular location is the cytoplasm. Its function is as follows. May have a role in actin patch assembly. The sequence is that of Protein HUA2 (HUA2) from Saccharomyces cerevisiae (strain ATCC 204508 / S288c) (Baker's yeast).